The following is a 67-amino-acid chain: Envelope small membrane protein (67 aa).

Glycine 2 is lipidated: N-myristoyl glycine; by host. The tract at residues 2 to 15 (GLVWSLISNSIQTI) is endoplasmic reticulum retention signal. Over 2–27 (GLVWSLISNSIQTIIADFAISVIDAA) the chain is Virion surface. A helical transmembrane segment spans residues 28–48 (LFFLMLLALAVVTVFLFWLIV). Residues 49-67 (AIGRSLVARCSRGARYRPV) lie on the Intravirion side of the membrane.

This sequence belongs to the arteriviridae E protein family. Homomultimer. Associates with itself into higher-order structures, including dimers, trimers and tetramers. Associates with the GP2b-GP3-GP4 complex. Post-translationally, myristoylated. Not glycosylated.

It is found in the virion membrane. Its subcellular location is the host endoplasmic reticulum membrane. It localises to the host Golgi apparatus membrane. The protein localises to the secreted. In terms of biological role, minor envelope protein. May function as a viroporin in the virion envelope that facilitates uncoating of the virus in order to release the genomic RNA into the cytoplasm for subsequent replication. The sequence is that of Envelope small membrane protein (GP2a) from Equidae (horses).